Reading from the N-terminus, the 275-residue chain is Adaptin ear-binding coat-associated protein 1 (275 aa).

A disordered region spans residues 166 to 190 (ITTKKGGTSKPKTAGTGGLSLLPPP). A compositionally biased stretch (low complexity) spans 167–179 (TTKKGGTSKPKTA). Thr-211 is subject to Phosphothreonine. Residues 215 to 275 (IPKSNHGGSD…APQPSNWVQF (61 aa)) form a disordered region. 2 short sequence motifs (WXXF motif) span residues 252–255 (WGDF) and 272–275 (WVQF). The span at 256–275 (STASSSVPNQAPQPSNWVQF) shows a compositional bias: polar residues.

The protein belongs to the NECAP family. In terms of assembly, interacts with AP1G1 and AP2A1 components of the adapter protein complexes AP-1 and AP-2. Interacts with the GAE domain proteins GGA1, GGA2 and GGA3.

It localises to the cytoplasmic vesicle. It is found in the clathrin-coated vesicle membrane. The protein resides in the cell membrane. Its function is as follows. Involved in endocytosis. The polypeptide is Adaptin ear-binding coat-associated protein 1 (NECAP1) (Bos taurus (Bovine)).